Here is a 521-residue protein sequence, read N- to C-terminus: Cytochrome P450 1A1 (521 aa).

Position 229 (Phe229) interacts with substrate. Position 463 (Cys463) interacts with heme.

Belongs to the cytochrome P450 family. The cofactor is heme.

It localises to the endoplasmic reticulum membrane. Its subcellular location is the microsome membrane. The catalysed reaction is an organic molecule + reduced [NADPH--hemoprotein reductase] + O2 = an alcohol + oxidized [NADPH--hemoprotein reductase] + H2O + H(+). In terms of biological role, cytochromes P450 are a group of heme-thiolate monooxygenases. They oxidize a variety of structurally unrelated compounds, including steroids, fatty acids, and xenobiotics. This Opsanus tau (Oyster toadfish) protein is Cytochrome P450 1A1 (cyp1a1).